The following is a 596-amino-acid chain: uncharacterized protein (596 aa).

Residues 7–26 (FWPILLGFTVLVAAGLYYVV) traverse the membrane as a helical segment.

The protein resides in the membrane. This is an uncharacterized protein from Sinorhizobium fredii (strain NBRC 101917 / NGR234).